Reading from the N-terminus, the 360-residue chain is (+)-6a-hydroxymaackiain 3-O-methyltransferase 1 (360 aa).

Residues 202 to 205, Asp-226, 226 to 227, 246 to 247, and Lys-260 contribute to the S-adenosyl-L-methionine site; these read VAGG, DQ, and DM. His-264 (proton acceptor) is an active-site residue.

The protein belongs to the class I-like SAM-binding methyltransferase superfamily. Cation-independent O-methyltransferase family. COMT subfamily.

It carries out the reaction (+)-6a-hydroxymaackiain + S-adenosyl-L-methionine = (+)-pisatin + S-adenosyl-L-homocysteine + H(+). The catalysed reaction is a 4'-hydroxyisoflavone + S-adenosyl-L-methionine = a 4'-methoxyisoflavone + S-adenosyl-L-homocysteine + H(+). Methyltransferase involved in the phytoalexin pisatin biosynthesis. Has both 3- and 4'-O-methyltransferase activities. Can use (+)-6a-hydroxymaackiain, 2,7,4'-trihydroxyisoflavanone and with much less activity (+)-medicarpin as substrates, but not (-)-6a-hydroxymaackiain, daidzein, formononetin or isoliquiritigenin. May be involved in formononetin biosynthesis. The protein is (+)-6a-hydroxymaackiain 3-O-methyltransferase 1 (HMM1) of Pisum sativum (Garden pea).